Consider the following 530-residue polypeptide: S-adenosylhomocysteine hydrolase-like protein 1 (530 aa).

Met-1 is modified (N-acetylmethionine). Ser-2 bears the N-acetylserine mark. Ser-2 is subject to Phosphoserine. N6-acetyllysine is present on Lys-40. The segment at 53–103 is disordered; it reads KFPTKTGRRSLSRSISQSSTDSYSSAASYTDSSDDEVSPREKQQTNSKGSS. Low complexity predominate over residues 64-83; it reads SRSISQSSTDSYSSAASYTD. Positions 65–92 are PEST; that stretch reads RSISQSSTDSYSSAASYTDSSDDEVSPR. Residues Ser-68, Ser-71, Ser-74, Ser-77, and Ser-84 each carry the phosphoserine modification. The tract at residues 138–201 is interaction with BCL2L10; that stretch reads QGEKPLAGAK…EAGVAVFAWK (64 aa). Substrate is bound by residues Thr-155, Asp-229, Glu-254, Lys-284, and Asp-288. The interval 281-448 is NAD binding; the sequence is SVTKQKFDNL…EGRLLNLSCS (168 aa). Residues 318–322, Glu-341, and Asn-376 contribute to the NAD(+) site; that span reads GYGEV. The residue at position 391 (Ser-391) is a Phosphoserine. An NAD(+)-binding site is contributed by 397 to 399; the sequence is MGH. The interval 520 to 530 is PDZ-binding; sequence NGPFKPNYYRY.

Belongs to the adenosylhomocysteinase family. As to quaternary structure, forms multimers. Forms heteromultimers with AHCYL2 (via the C-terminal region). Interacts (when phosphorylated) with ITPR1 (when not phosphorylated); the interaction suppresses inositol 1,4,5-trisphosphate binding to ITPR1. Interacts with BCL2L10; this strengthens the interaction of AHCYL1 with ITPR1. Interacts with CFTR and SLC26A6; the interactions take place once AHCYL1 is released from ITPR1 and increase CFTR and SLC26A6 activities. Interacts with RRM1; in a phosphorylation- and (dATP)-dependent manner. Interacts (via PEST domain when phosphorylated) with SLC4A4 isoform 1 but not isoform 2; the interaction increases SLC4A4 isoform 1 activity. Interacts (when phosphorylated) with SLC9A3; the interaction is required for SLC9A3 apical location and activity. Interacts (when phosphorylated) with FIP1L1; the interaction is direct and associates AHCYL1 with the CPSF complex and RNA. Interacts with PAPOLA. Interacts with ZCCHC4. Interacts with AHCY. It depends on NAD(+) as a cofactor. In terms of processing, phosphorylated at Ser/Thr residues between Ser-68 and Thr-72 in the PEST region: required for interaction with dATP-bound RRM1 and ITPR1. Phosphorylation at Ser-68 by PRKD1 and CAMK4 is required for further phosphorylations by CSNK1A1. Phosphorylation is induced by oxidative stress. Probably phosphorylated by CAMK2A; phosphorylation at Ser-68 may be required for interaction with SLC9A3. Dephosphorylated in response to apoptotic stress conditions which causes translocation of both AHCYL1 and BCL2L10 from mitochondria-associated endoplasmic reticulum membranes and promotes apoptosis. In terms of tissue distribution, expressed in dendritic cells.

The protein resides in the endoplasmic reticulum. It localises to the cytoplasm. Its subcellular location is the cytosol. The protein localises to the apical cell membrane. It is found in the microsome. Multifaceted cellular regulator which coordinates several essential cellular functions including regulation of epithelial HCO3(-) and fluid secretion, mRNA processing and DNA replication. Regulates ITPR1 sensitivity to inositol 1,4,5-trisphosphate, competing for the common binding site and acting as endogenous 'pseudoligand' whose inhibitory activity can be modulated by its phosphorylation status. Promotes the formation of contact points between the endoplasmic reticulum (ER) and mitochondria, facilitating transfer of Ca(2+) from the ER to mitochondria. Under normal cellular conditions, functions cooperatively with BCL2L10 to limit ITPR1-mediated Ca(2+) release but, under apoptotic stress conditions, dephosphorylated which promotes dissociation of both AHCYL1 and BCL2L10 from mitochondria-associated endoplasmic reticulum membranes, inhibits BCL2L10 interaction with ITPR1 and leads to increased Ca(2+) transfer to mitochondria which promotes apoptosis. In the pancreatic and salivary ducts, at resting state, attenuates inositol 1,4,5-trisphosphate-induced calcium release by interacting with ITPR1. When extracellular stimuli induce ITPR1 phosphorylation or inositol 1,4,5-trisphosphate production, dissociates from ITPR1 to interact with CFTR and SLC26A6, mediating their synergistic activation by calcium and cAMP that stimulates the epithelial secretion of electrolytes and fluid. Also activates basolateral SLC4A4 isoform 1 to coordinate fluid and HCO3(-) secretion. Inhibits the effect of STK39 on SLC4A4 and CFTR by recruiting PP1 phosphatase which activates SLC4A4, SLC26A6 and CFTR through dephosphorylation. Mediates the induction of SLC9A3 surface expression produced by Angiotensin-2. Depending on the cell type, activates SLC9A3 in response to calcium or reverses SLC9A3R2-dependent calcium inhibition. May modulate the polyadenylation state of specific mRNAs, both by controlling the subcellular location of FIP1L1 and by inhibiting PAPOLA activity, in response to a stimulus that alters its phosphorylation state. Acts as a (dATP)-dependent inhibitor of ribonucleotide reductase large subunit RRM1, controlling the endogenous dNTP pool and ensuring normal cell cycle progression. In vitro does not exhibit any S-adenosyl-L-homocysteine hydrolase activity. This Homo sapiens (Human) protein is S-adenosylhomocysteine hydrolase-like protein 1.